The primary structure comprises 27 residues: Alpha-amylase/trypsin inhibitor CM17 (27 aa).

It belongs to the protease inhibitor I6 (cereal trypsin/alpha-amylase inhibitor) family. In terms of tissue distribution, developing endosperm.

Its subcellular location is the secreted. Functionally, alpha-amylase/trypsin inhibitor. It could be involved in insect defense mechanisms. This is Alpha-amylase/trypsin inhibitor CM17 from Triticum aestivum (Wheat).